The sequence spans 247 residues: Ras-like protein family member 11B (247 aa).

Residues 29–247 (ASSRVIKIAV…SAKVRTATSV (219 aa)) form a small GTPase-like region. Residues 40–47 (GGSGVGKT), 87–91 (DTPGV), and 152–155 (NKAD) each bind GTP. The interval 205–228 (QNTGTPERRKNSLIPRPKSPNMQD) is disordered.

The protein belongs to the small GTPase superfamily. Ras family.

The enzyme catalyses GTP + H2O = GDP + phosphate + H(+). The polypeptide is Ras-like protein family member 11B (Xenopus tropicalis (Western clawed frog)).